The following is a 1039-amino-acid chain: Integrin alpha-4 (1039 aa).

Residues 1–40 (MFSTKSAWLRNGGADQGPRGIALREAVMLLLYFGVPTGPS) form the signal peptide. Topologically, residues 41–983 (YNLDPENALL…LHHQRPKRHF (943 aa)) are extracellular. 7 FG-GAP repeats span residues 42 to 107 (NLDP…PNQT), 117 to 184 (SGEP…TELS), 193 to 244 (DYTR…QYKA), 246 to 298 (VDRQ…ENEL), 299 to 358 (NIVY…GAVM), 362 to 419 (ERVL…GISS), and 423 to 485 (QRIE…HPES). N-linked (GlcNAc...) asparagine glycosylation is found at Asn86, Asn105, and Asn145. The cysteines at positions 98 and 108 are disulfide-linked. 2 disulfide bridges follow: Cys151–Cys172 and Cys190–Cys205. N-linked (GlcNAc...) asparagine glycosylation occurs at Asn236. Asp321, Asn323, Asp325, Asp329, Asp384, Asp386, Asp388, Asp392, Asp446, Asp448, Asn450, Tyr452, and Asp454 together coordinate Ca(2+). The N-linked (GlcNAc...) asparagine glycan is linked to Asn487. 2 cysteine pairs are disulfide-bonded: Cys493-Cys502 and Cys508-Cys564. Asn525 and Asn545 each carry an N-linked (GlcNAc...) asparagine glycan. An SG1 motif is present at residues 613–623 (KKEKDVIRKMI). An intrachain disulfide couples Cys629 to Cys634. Asn633, Asn652, and Asn667 each carry an N-linked (GlcNAc...) asparagine glycan. A disulfide bond links Cys705 and Cys718. N-linked (GlcNAc...) asparagine glycans are attached at residues Asn813 and Asn828. Cystine bridges form between Cys859-Cys897 and Cys904-Cys909. The chain crosses the membrane as a helical span at residues 984–1007 (TIIIITISLLLGLIVLLLISCVMW). Topologically, residues 1008 to 1039 (KAGFFKRQYKSILQEENRRDSWSYVNSKSNDD) are cytoplasmic. The GFFKR motif signature appears at 1010 to 1014 (GFFKR). Ser1028 bears the Phosphoserine mark.

The protein belongs to the integrin alpha chain family. As to quaternary structure, heterodimer of an alpha and a beta subunit. The alpha subunit can sometimes be cleaved into two non-covalently associated fragments. Alpha-4 associates with either beta-1 or beta-7. Alpha-4 interacts with PXN, LPXN, and TGFB1I1/HIC5. Interacts with CSPG4 through CSPG4 chondroitin sulfate glycosaminoglycan. Interacts with JAML; integrin alpha-4/beta-1 may regulate leukocyte to endothelial cells adhesion by controlling JAML homodimerization. ITGA4:ITGB1 is found in a ternary complex with CX3CR1 and CX3CL1. Interacts with MDK. ITGA4:ITGB1 interacts with MDK; this interaction mediates MDK-induced osteoblast cells migration through PXN phosphorylation. Integrin ITGA4:ITGB1 interacts with SVEP1 (via Sushi domain 21); thereby inhibits Ca(2+) intracellular signaling and as a result represses vasocontraction. ITGA4:ITGB1 interacts with SELP. ITGA4:ITGB1 interacts with BCAM. Phosphorylation on Ser-1028 inhibits PXN binding. In terms of tissue distribution, expressed in the media layer of the arterial wall (at protein level). Weakly expression in the thymus, spleen and mesenteric lymph nodes.

The protein resides in the membrane. Functionally, integrins alpha-4/beta-1 (VLA-4 or LPAM-2) and alpha-4/beta-7 (LPAM-1) are receptors for fibronectin. They recognize one or more domains within the alternatively spliced CS-1 and CS-5 regions of fibronectin. They are also receptors for VCAM1. Integrin alpha-4/beta-1 recognizes the sequence Q-I-D-S in VCAM1. Integrin alpha-4/beta-7 is also a receptor for MADCAM1. It recognizes the sequence L-D-T in MADCAM1. On activated endothelial cells integrin VLA-4 triggers homotypic aggregation for most VLA-4-positive leukocyte cell lines. It may also participate in cytolytic T-cell interactions with target cells. ITGA4:ITGB1 binds to fractalkine (CX3CL1) and may act as its coreceptor in CX3CR1-dependent fractalkine signaling. ITGA4:ITGB1 binds to PLA2G2A via a site (site 2) which is distinct from the classical ligand-binding site (site 1) and this induces integrin conformational changes and enhanced ligand binding to site 1. Integrin ITGA4:ITGB1 represses PRKCA-mediated L-type voltage-gated channel Ca(2+) influx and ROCK-mediated calcium sensitivity in vascular smooth muscle cells via its interaction with SVEP1, thereby inhibiting vasocontraction. This chain is Integrin alpha-4 (Itga4), found in Mus musculus (Mouse).